The chain runs to 162 residues: RNA pyrophosphohydrolase (162 aa).

The Nudix hydrolase domain maps to E7–E149. A Nudix box motif is present at residues G40–G61.

It belongs to the Nudix hydrolase family. RppH subfamily. Requires a divalent metal cation as cofactor.

Accelerates the degradation of transcripts by removing pyrophosphate from the 5'-end of triphosphorylated RNA, leading to a more labile monophosphorylated state that can stimulate subsequent ribonuclease cleavage. This Wolbachia pipientis subsp. Culex pipiens (strain wPip) protein is RNA pyrophosphohydrolase.